The sequence spans 568 residues: Sesquiterpene synthase 14 (568 aa).

The Mg(2+) site is built by Asp-319, Asp-323, Asp-463, and Glu-471. Residues 319 to 323 carry the DDXXD motif motif; sequence DDLYD.

The protein belongs to the terpene synthase family. Tpsa subfamily. Requires Mg(2+) as cofactor. It depends on Mn(2+) as a cofactor. Mostly expressed in roots, to a lower extent in flowers and, at low levels, in fruits.

It carries out the reaction (2Z,6Z)-farnesyl diphosphate = (E)-alpha-bisabolene + diphosphate. The enzyme catalyses (2Z,6Z)-farnesyl diphosphate = beta-bisabolene + diphosphate. It catalyses the reaction (2E,6E)-farnesyl diphosphate = beta-bisabolene + diphosphate. The catalysed reaction is (2E,6E)-farnesyl diphosphate = (Z)-gamma-bisabolene + diphosphate. It carries out the reaction (2E,6E)-farnesyl diphosphate = (E)-gamma-bisabolene + diphosphate. The enzyme catalyses (2Z,6Z)-farnesyl diphosphate = (E)-gamma-bisabolene + diphosphate. It functions in the pathway secondary metabolite biosynthesis; terpenoid biosynthesis. Sesquiterpene synthase involved in the biosynthesis of volatile compounds. Mediates the conversion of (2E,6E)-farnesyl diphosphate ((EE)-FPP) into beta-bisabolene, and of (2Z,6Z)-farnesyl diphosphate ((ZZ)-FPP) into alpha-bisabolene, but also smaller amounts of (Z)-gamma-bisabolene, (E)-gamma-bisabolene and nerolidol. The polypeptide is Sesquiterpene synthase 14 (Solanum lycopersicum (Tomato)).